Consider the following 191-residue polypeptide: dCTP deaminase, dUMP-forming (191 aa).

DCTP contacts are provided by residues 101 to 106 (KSSLGR), Asp119, 127 to 129 (TLE), Gln148, Tyr162, and Gln174. Glu129 functions as the Proton donor/acceptor in the catalytic mechanism. The interval 163–191 (GSPVYGSRYQGQRGPTPSRSWQNFHRTKI) is disordered. Residues 171 to 191 (YQGQRGPTPSRSWQNFHRTKI) show a composition bias toward polar residues.

This sequence belongs to the dCTP deaminase family. Homotrimer.

The catalysed reaction is dCTP + 2 H2O = dUMP + NH4(+) + diphosphate. It functions in the pathway pyrimidine metabolism; dUMP biosynthesis; dUMP from dCTP: step 1/1. In terms of biological role, bifunctional enzyme that catalyzes both the deamination of dCTP to dUTP and the hydrolysis of dUTP to dUMP without releasing the toxic dUTP intermediate. The protein is dCTP deaminase, dUMP-forming of Acidothermus cellulolyticus (strain ATCC 43068 / DSM 8971 / 11B).